A 489-amino-acid polypeptide reads, in one-letter code: MSFRKVVRQSKFRHVFGQPVKNDQCYEDIRVSRVTWDSTFCAVNPKFLAVIVEASGGGAFLVLPLSKTGRIDKAYPTVCGHTGPVLDIDWCPHNDEVIASGSEDCTVMVWQIPENGLTSPLTEPVVVLEGHTKRVGIIAWHPTARNVLLSAGCDNVVLIWNVGTAEELYRLDSLHPDLIYNVSWNHNGSLFCSACKDKSVRIIDPRRGTLVAEREKAHEGARPMRAIFLADGKVFTTGFSRMSERQLALWDPENLEEPMALQELDSSNGALLPFYDPDTSVVYVCGKGDSSIRYFEITEEPPYIHFLNTFTSKEPQRGMGSMPKRGLEVSKCEIARFYKLHERKCEPIVMTVPRKSDLFQDDLYPDTAGPEAALEAEEWVSGRDADPILISLREAYVPSKQRDLKISRRNVLSDSRPAMAPGSSHLGAPASTTTAADATPSGSLARAGEAGKLEEVMQELRALRALVKEQGDRICRLEEQLGRMENGDA.

S2 is modified (phosphoserine; by PKC). WD repeat units follow at residues 18 to 72 (QPVK…GRID), 73 to 122 (KAYP…SPLT), 123 to 166 (EPVV…GTAE), 167 to 210 (ELYR…RGTL), 211 to 256 (VAER…ENLE), and 257 to 296 (EPMA…RYFE). The tract at residues 408 to 444 (RRNVLSDSRPAMAPGSSHLGAPASTTTAADATPSGSL) is disordered. Residues 428–441 (APASTTTAADATPS) show a composition bias toward low complexity. Residues 449–474 (EAGKLEEVMQELRALRALVKEQGDRI) are a coiled coil.

Belongs to the WD repeat coronin family. In terms of assembly, forms homooligomers, but does not form complexes with the other coronins. Interacts with Arp2/3 complex components, including ACTR2, ARPC1B and ARPC2. Binds actin. Phosphorylation by PKC on Ser-2 regulates the interaction with the Arp2/3 complex and cell motility in fibroblasts. Phosphorylation does not seem to affect subcellular location.

It localises to the cytoplasm. It is found in the cytoskeleton. Its subcellular location is the stress fiber. In terms of biological role, regulates leading edge dynamics and cell motility in fibroblasts. May be involved in cytokinesis and signal transduction. The polypeptide is Coronin-1B (CORO1B) (Homo sapiens (Human)).